The sequence spans 290 residues: MFSGSIVALVTPMRNDSVDVHHLRELVEFHIAKGTHALVAAGTTGEAGTLSHSEKLLVIKTVIEQAKERVPVIAGTAMNATKDCIELTQQAMEYGAHAAFIMTPAYIKPTQEGLYLHYSHIAQSVAIPIILYNVPGRTACDMLPETVARLAKISNIIGIKEATGQMTRLQQILRLCEGSIDVYSGDDLTAAQWLLSGAKGVISVTANVAAKLMAKMCDLAMDDDQAGCLRIQEQLMPLHELLFVESNPIPVKWAMKKMGLIGGELRLPMTELSEKHHQALEKVLKNLELI.

Threonine 44 contributes to the pyruvate binding site. Tyrosine 132 (proton donor/acceptor) is an active-site residue. Catalysis depends on lysine 160, which acts as the Schiff-base intermediate with substrate. Isoleucine 202 serves as a coordination point for pyruvate.

It belongs to the DapA family. Homotetramer; dimer of dimers.

The protein resides in the cytoplasm. The catalysed reaction is L-aspartate 4-semialdehyde + pyruvate = (2S,4S)-4-hydroxy-2,3,4,5-tetrahydrodipicolinate + H2O + H(+). The protein operates within amino-acid biosynthesis; L-lysine biosynthesis via DAP pathway; (S)-tetrahydrodipicolinate from L-aspartate: step 3/4. Its function is as follows. Catalyzes the condensation of (S)-aspartate-beta-semialdehyde [(S)-ASA] and pyruvate to 4-hydroxy-tetrahydrodipicolinate (HTPA). The chain is 4-hydroxy-tetrahydrodipicolinate synthase from Legionella pneumophila (strain Corby).